The sequence spans 401 residues: LL-diaminopimelate aminotransferase (401 aa).

Substrate-binding residues include tyrosine 15 and glycine 42. Residues tyrosine 72, alanine 108–lysine 109, tyrosine 132, asparagine 176, tyrosine 207, and serine 235–serine 237 contribute to the pyridoxal 5'-phosphate site. Substrate is bound by residues lysine 109, tyrosine 132, and asparagine 176. Residue lysine 238 is modified to N6-(pyridoxal phosphate)lysine. Residues arginine 246 and asparagine 281 each contribute to the pyridoxal 5'-phosphate site. Positions 281 and 377 each coordinate substrate.

It belongs to the class-I pyridoxal-phosphate-dependent aminotransferase family. LL-diaminopimelate aminotransferase subfamily. In terms of assembly, homodimer. Requires pyridoxal 5'-phosphate as cofactor.

The catalysed reaction is (2S,6S)-2,6-diaminopimelate + 2-oxoglutarate = (S)-2,3,4,5-tetrahydrodipicolinate + L-glutamate + H2O + H(+). It functions in the pathway amino-acid biosynthesis; L-lysine biosynthesis via DAP pathway; LL-2,6-diaminopimelate from (S)-tetrahydrodipicolinate (aminotransferase route): step 1/1. Functionally, involved in the synthesis of meso-diaminopimelate (m-DAP or DL-DAP), required for both lysine and peptidoglycan biosynthesis. Catalyzes the direct conversion of tetrahydrodipicolinate to LL-diaminopimelate. The chain is LL-diaminopimelate aminotransferase from Azobacteroides pseudotrichonymphae genomovar. CFP2.